Consider the following 284-residue polypeptide: MINQIKTYLLMALLVGLIYAICMMLHIHPLIAIILALIPNVIAYYMSDKLVLMSYNARILEEHEMPWLHQMVERVARKAGLPKPKVAIVPTETPNAFATGRNPENAVVAVTEGILKLLSPEELEGVIGHEISHIKHRDILISTIVATLAGAIVMIAEWMLYWGGIFFVSEEEESNPLELIGTILLLILAPIAATIIQFAISRQREFYADEEGAKLTHPLWLANALAKLERGVELYPLERGNPATAHMFIINPFRKDFIAKLFSTHPPTEERIERLLEMCKRIGK.

Helical transmembrane passes span 7 to 26 (TYLLMALLVGLIYAICMMLH) and 33 to 47 (IILALIPNVIAYYMS). H129 contacts Zn(2+). Residue E130 is part of the active site. H133 lines the Zn(2+) pocket. 2 helical membrane passes run 148-168 (LAGAIVMIAEWMLYWGGIFFV) and 180-200 (IGTILLLILAPIAATIIQFAI). E205 is a Zn(2+) binding site.

This sequence belongs to the peptidase M48B family. The cofactor is Zn(2+).

It localises to the cell membrane. The polypeptide is Protease HtpX homolog (Methanocaldococcus jannaschii (strain ATCC 43067 / DSM 2661 / JAL-1 / JCM 10045 / NBRC 100440) (Methanococcus jannaschii)).